A 686-amino-acid polypeptide reads, in one-letter code: AsmA family protein YhjG (686 aa).

The Cytoplasmic segment spans residues 1 to 6; the sequence is MSKAGK. A helical transmembrane segment spans residues 7–27; that stretch reads ITAAISGAFLLLIVVAIILIA. Topologically, residues 28–686 are periplasmic; it reads TFDWNRLKPT…CRTILSQMKK (659 aa). Residues 372–396 form a disordered region; sequence VDSGKGAEKSKRSEQKKGEKSVQPA. Residues 376–391 are compositionally biased toward basic and acidic residues; it reads KGAEKSKRSEQKKGEK.

This sequence belongs to the AsmA family.

The protein localises to the cell inner membrane. The sequence is that of AsmA family protein YhjG (yhjG) from Escherichia coli (strain K12).